We begin with the raw amino-acid sequence, 294 residues long: Gap junction delta-3 protein (294 aa).

Over 1–24 (MGEWAFLGSLLDAVQLQSPLVGRL) the chain is Cytoplasmic. A helical membrane pass occupies residues 25–45 (WLVVMLIFRILVLATVGGAVF). Residues 46–76 (EDEQEEFVCNTLQPGCRQTCYDRAFPVSHYR) lie on the Extracellular side of the membrane. A helical transmembrane segment spans residues 77-97 (FWLFHILLLSAPPVLFVVYSM). The Cytoplasmic segment spans residues 98-136 (HRAGKEAGGAEAAAQCAPGLPEAQCAPCALRARRARRCY). Residues 137 to 157 (LLSVALRLLAELTFLGGQALL) form a helical membrane-spanning segment. Residues 158–188 (YGFRVAPHFACAGPPCPHTVDCFVSRPTEKT) are Extracellular-facing. A helical transmembrane segment spans residues 189–209 (VFVLFYFAVGLLSALLSVAEL). Residues 210–294 (GHLLWKGRPR…PATGRRDLAI (85 aa)) lie on the Cytoplasmic side of the membrane. The segment at 233-294 (EAQKLLPPPP…PATGRRDLAI (62 aa)) is disordered. The segment covering 238 to 250 (LPPPPPPPPPPAL) has biased composition (pro residues).

This sequence belongs to the connexin family. Delta-type subfamily. As to quaternary structure, a connexon is composed of a hexamer of connexins. Interacts with TJP1. In terms of tissue distribution, expressed in vascular smooth muscle cells. Found in heart, colon, and artery (at protein level). Found in cerebral cortex, heart, liver, lung, kidney, spleen and testis.

Its subcellular location is the cell membrane. The protein localises to the cell junction. It localises to the gap junction. One gap junction consists of a cluster of closely packed pairs of transmembrane channels, the connexons, through which materials of low MW diffuse from one cell to a neighboring cell. This chain is Gap junction delta-3 protein (GJD3), found in Homo sapiens (Human).